Here is a 335-residue protein sequence, read N- to C-terminus: MTHNIHDNISQWMKSNEETPIVMSSRIRLARNLENHVHPLMYATENDGFRVINEVQDALPNFELMRLDQMDQQSKMKMVAKHLISPELIKQPAAAVLVNDDESLSVMINEEDHIRIQAMGTDTTLQALYNQASSIDDELDRSLDISYDEQLGYLTTCPTNIGTGMRASVMLHLPGLSIMKRMTRIAQTINRFGYTIRGIYGEGSQVYGHTYQVSNQLTLGKSELEIIETLTEVVNQIIHDEKQIRQKLDTYNQLETQDRVFRSLGILQNCRMITMEEASYRLSEVKLGIDLNYIELQNFKFNELMVAIQSPFLLDEEDDKSVKEKRADILREHIK.

The Phosphagen kinase C-terminal domain occupies 21-244; that stretch reads IVMSSRIRLA…NQIIHDEKQI (224 aa). ATP-binding positions include 24–28, H82, R115, 166–170, and 197–202; these read SSRIR, RASVM, and RGIYGE.

This sequence belongs to the ATP:guanido phosphotransferase family.

It carries out the reaction L-arginyl-[protein] + ATP = N(omega)-phospho-L-arginyl-[protein] + ADP + H(+). Functionally, catalyzes the specific phosphorylation of arginine residues in proteins. The chain is Protein-arginine kinase from Staphylococcus aureus (strain Mu3 / ATCC 700698).